Here is an 82-residue protein sequence, read N- to C-terminus: Cortexin-1 (82 aa).

Positions 1–20 (MSAPWTLSPEPLPPSTGPPV) are disordered. A helical transmembrane segment spans residues 30 to 50 (TVFAFVLCLLVVLVLLMVRCV).

The protein belongs to the cortexin family. In terms of tissue distribution, neuron specific.

It is found in the membrane. Its function is as follows. May mediate extracellular or intracellular signaling of cortical neurons during forebrain development. The polypeptide is Cortexin-1 (Ctxn1) (Rattus norvegicus (Rat)).